Here is a 473-residue protein sequence, read N- to C-terminus: Bifunctional protein HldE (473 aa).

The interval 1-316 (MILPDFSLAR…AIAIHGQRAP (316 aa)) is ribokinase. 193–196 (NLSE) contacts ATP. Asp262 is a catalytic residue. The segment at 342-473 (VTNGCFDLLH…TRIIEAIRNG (132 aa)) is cytidylyltransferase.

In the N-terminal section; belongs to the carbohydrate kinase PfkB family. This sequence in the C-terminal section; belongs to the cytidylyltransferase family. As to quaternary structure, homodimer.

It carries out the reaction D-glycero-beta-D-manno-heptose 7-phosphate + ATP = D-glycero-beta-D-manno-heptose 1,7-bisphosphate + ADP + H(+). The catalysed reaction is D-glycero-beta-D-manno-heptose 1-phosphate + ATP + H(+) = ADP-D-glycero-beta-D-manno-heptose + diphosphate. It participates in nucleotide-sugar biosynthesis; ADP-L-glycero-beta-D-manno-heptose biosynthesis; ADP-L-glycero-beta-D-manno-heptose from D-glycero-beta-D-manno-heptose 7-phosphate: step 1/4. Its pathway is nucleotide-sugar biosynthesis; ADP-L-glycero-beta-D-manno-heptose biosynthesis; ADP-L-glycero-beta-D-manno-heptose from D-glycero-beta-D-manno-heptose 7-phosphate: step 3/4. Functionally, catalyzes the phosphorylation of D-glycero-D-manno-heptose 7-phosphate at the C-1 position to selectively form D-glycero-beta-D-manno-heptose-1,7-bisphosphate. Catalyzes the ADP transfer from ATP to D-glycero-beta-D-manno-heptose 1-phosphate, yielding ADP-D-glycero-beta-D-manno-heptose. In Methylococcus capsulatus (strain ATCC 33009 / NCIMB 11132 / Bath), this protein is Bifunctional protein HldE.